The following is a 336-amino-acid chain: Foldase protein PrsA (336 aa).

Residues 1-22 (MKSAKKLLSVLCLGIFILTFTA) form the signal peptide. A lipid anchor (N-palmitoyl cysteine) is attached at cysteine 23. Residue cysteine 23 is the site of S-diacylglycerol cysteine attachment. The region spanning 194–286 (PNTMNVSHIL…FGYHIIKINS (93 aa)) is the PpiC domain.

This sequence belongs to the PrsA family.

It is found in the cell membrane. It catalyses the reaction [protein]-peptidylproline (omega=180) = [protein]-peptidylproline (omega=0). Functionally, plays a major role in protein secretion by helping the post-translocational extracellular folding of several secreted proteins. This chain is Foldase protein PrsA, found in Clostridium botulinum (strain Kyoto / Type A2).